The sequence spans 337 residues: MSKQEELLIQWGDRVKACLANLDIKSLGRVGVLLGGRSGEREISLMSGNGVLQALLSKGVDAHGFDPGLRNPTELATEKFDRIFISLHGRFGEDGTIQGLLELLELPYTGSGVLASALAIDKIATKQIWISNGLSTPEYEELTAKSDWNAVVKHLGLPLIVKPAHEGSSLGLTKVKSVEELPAAYQLAAGLDKKVIAETCIVGDELTCPLVGQGNSAEALPVIKIIPPQANYDFHNKYFSDETQYLCPTGLTAEINAAVQDLALAAYQTLGCRTWGRADVMLDKKTGKPYLLEMNTSPGMTSHSLVPMAAKAAGVEYADLVLWLLSQTLLQKEGART.

Residues 126 to 326 (KQIWISNGLS…YADLVLWLLS (201 aa)) enclose the ATP-grasp domain. 152-207 (VKHLGLPLIVKPAHEGSSLGLTKVKSVEELPAAYQLAAGLDKKVIAETCIVGDELT) contacts ATP. Mg(2+)-binding residues include Asp-279, Glu-293, and Asn-295.

It belongs to the D-alanine--D-alanine ligase family. The cofactor is Mg(2+). Requires Mn(2+) as cofactor.

Its subcellular location is the cytoplasm. It catalyses the reaction 2 D-alanine + ATP = D-alanyl-D-alanine + ADP + phosphate + H(+). The protein operates within cell wall biogenesis; peptidoglycan biosynthesis. In terms of biological role, cell wall formation. This Polynucleobacter asymbioticus (strain DSM 18221 / CIP 109841 / QLW-P1DMWA-1) (Polynucleobacter necessarius subsp. asymbioticus) protein is D-alanine--D-alanine ligase.